We begin with the raw amino-acid sequence, 684 residues long: Hydroxyproline O-galactosyltransferase GALT2 (684 aa).

Topologically, residues 1-22 (MKRVKSESFRGVYSSRRFKLSH) are cytoplasmic. The chain crosses the membrane as a helical; Signal-anchor for type II membrane protein span at residues 23–43 (FLLAIAGFYLVFLAFKFPHFI). At 44-684 (EMVAMLSGDT…KGRPQCCNFR (641 aa)) the chain is on the lumenal side. The interval 80 to 102 (KLEDEDHQSGPSTTQKVSPEEKI) is disordered. N-linked (GlcNAc...) asparagine glycans are attached at residues Asn103, Asn127, and Asn162. Residues 191–405 (RIMLLPCGLA…DVDIHSIHAT (215 aa)) enclose the Galectin domain. 2 N-linked (GlcNAc...) asparagine glycosylation sites follow: Asn524 and Asn632.

The protein belongs to the glycosyltransferase 31 family. Mn(2+) is required as a cofactor. As to expression, expressed in stems and at lower levels in cauline leaves and siliques.

The protein resides in the golgi apparatus membrane. Its pathway is protein modification; protein glycosylation. Functionally, possesses hydroxyproline O-galactosyltransferase activity. Transfers galactose from UDP-galactose to hydroxyproline residues in the arabinogalactan proteins (AGPs). Is specific for AGPs containing non-contiguous peptidyl hydroxyproline residues. Utilizes UDP-galactose solely as sugar donor. The addition of galactose onto the peptidyl hydroxyproline residues in AGP core proteins represents the first committed step in arabinogalactan polysaccharide addition. AGP glycans play essential roles in both vegetative and reproductive plant growth. In Arabidopsis thaliana (Mouse-ear cress), this protein is Hydroxyproline O-galactosyltransferase GALT2.